Here is a 371-residue protein sequence, read N- to C-terminus: Geranylgeranyl pyrophosphate synthase paxG (371 aa).

Positions 89, 92, and 121 each coordinate isopentenyl diphosphate. D128 and D132 together coordinate Mg(2+). Residue R137 coordinates dimethylallyl diphosphate. Residue R138 participates in isopentenyl diphosphate binding. Positions 215, 216, and 249 each coordinate dimethylallyl diphosphate. Residue D252 coordinates Mg(2+). Dimethylallyl diphosphate-binding residues include N256, K266, and K276. The Peroxisomal targeting signal signature appears at 369-371 (GRV).

It belongs to the FPP/GGPP synthase family. The cofactor is Mg(2+).

It is found in the peroxisome. The catalysed reaction is isopentenyl diphosphate + dimethylallyl diphosphate = (2E)-geranyl diphosphate + diphosphate. It carries out the reaction isopentenyl diphosphate + (2E)-geranyl diphosphate = (2E,6E)-farnesyl diphosphate + diphosphate. It catalyses the reaction isopentenyl diphosphate + (2E,6E)-farnesyl diphosphate = (2E,6E,10E)-geranylgeranyl diphosphate + diphosphate. The protein operates within secondary metabolite biosynthesis. Geranylgeranyl pyrophosphate synthase; part of the gene cluster that mediates the biosynthesis of paxilline, a mycotoxin that acts as an inhibitor of mammalian maxi-K channels. PaxG, the geranylgeranyl diphosphate (GGPP) synthase is proposed to catalyze the first step in paxilline biosynthesis. Condensation of indole-3-glycerol phosphate with GGPP by paxC then forms 3-geranylgeranylindole (3-GGI), followed by epoxidation and cyclization of this intermediate (by paxM and paxB) to form paspaline. Paspaline is subsequently converted to 13-desoxypaxilline by paxP, the latter being then converted to paxilline by paxQ. Finally paxilline can be mono- and di-prenylated by paxD. The polypeptide is Geranylgeranyl pyrophosphate synthase paxG (Penicillium paxilli).